A 605-amino-acid polypeptide reads, in one-letter code: Conglutin beta 7 (605 aa).

The N-terminal stretch at 1–30 (MARMRVRFPTLVLLLGILFLMAVSIGIAYG) is a signal peptide. Residues 37-105 (NHERPGEREH…REPCREREQE (69 aa)) show a composition bias toward basic and acidic residues. Disordered regions lie at residues 37–193 (NHER…RFQT), 346–367 (LGNEDEQEDEEQRRGQEQSYQD), and 382–405 (LRKHAQSSSRKGKPSESGPFNLRS). A compositionally biased stretch (low complexity) spans 140–149 (QGSSSSSRKQ). The segment covering 150 to 179 (SGYERRQYHERREQRDEKEKEQDSRSDSRR) has biased composition (basic and acidic residues). The Cupin type-1 1 domain occupies 184–342 (YHFSSERFQT…TFNTRYEEIQ (159 aa)). Residues 401 to 563 (FNLRSNESIY…TFPGSAQDVE (163 aa)) form the Cupin type-1 2 domain. Residues Asn-406 and Asn-513 are each glycosylated (N-linked (GlcNAc...) asparagine). Residues 574–593 (FANAQPQQKQQREKEGRRGR) form a disordered region.

The protein belongs to the 7S seed storage protein family. In terms of assembly, component of globulins complexes which accumulate in seeds.

In terms of biological role, seed storage protein. Accumulates during seed development and is hydrolyzed after germination to provide a carbon and nitrogen source for the developing seedling. The chain is Conglutin beta 7 from Lupinus angustifolius (Narrow-leaved blue lupine).